An 851-amino-acid polypeptide reads, in one-letter code: Venom phosphodiesterase (851 aa).

Residues 1 to 23 form the signal peptide; sequence MIQQKVLFISLVAVALGLGLGLG. SMB domains follow at residues 30 to 73 and 74 to 118; these read PQVS…VLPT and QSWS…GETS. 16 disulfide bridges follow: Cys-34/Cys-38, Cys-34/Cys-51, Cys-38/Cys-69, Cys-49/Cys-51, Cys-49/Cys-62, Cys-55/Cys-61, Cys-62/Cys-69, Cys-78/Cys-83, Cys-78/Cys-95, Cys-83/Cys-113, Cys-93/Cys-95, Cys-93/Cys-106, Cys-99/Cys-105, Cys-106/Cys-113, Cys-124/Cys-170, and Cys-132/Cys-344. N-linked (GlcNAc...) asparagine glycosylation is present at Asn-39. Positions 58 to 60 match the Cell attachment site motif; that stretch reads RQA. A divalent metal cation contacts are provided by Asp-147 and Thr-185. Residue Thr-185 is the AMP-threonine intermediate of the active site. N-linked (GlcNAc...) asparagine glycans are attached at residues Asn-216, Asn-259, and Asn-270. Lys-271 serves as a coordination point for AMP. A divalent metal cation contacts are provided by Asp-305, His-309, Asp-352, and His-353. AMP is bound at residue His-309. 6 disulfide bridges follow: Cys-360/Cys-457, Cys-408/Cys-793, Cys-541/Cys-599, Cys-554/Cys-654, Cys-556/Cys-639, and Cys-762/Cys-772. N-linked (GlcNAc...) asparagine glycosylation is present at Asn-405. Position 462 (His-462) interacts with a divalent metal cation. N-linked (GlcNAc...) asparagine glycosylation is found at Asn-512, Asn-594, and Asn-745.

This sequence belongs to the nucleotide pyrophosphatase/phosphodiesterase family. As to quaternary structure, monomer cleaved in two subunits; disulfide-linked. Is synthesized as a single-chain protein and is subsequently cleaved to form a two-subunit protein held together with disulfide bonds. A divalent metal cation serves as cofactor. In terms of tissue distribution, expressed by venom gland.

Its subcellular location is the secreted. It carries out the reaction ADP + H2O = AMP + phosphate + H(+). Its function is as follows. Hydrolyzes ADP with high activity. Shows weak or no activity on 5'-AMP, 5'-GMP, 3'-AMP, ATP, cAMP, and cGMP. Is devoid of monophosphatase and proteinase activities. Dose-dependently inhibits platelet aggregation induced by ADP (IC(50)=0.99 uM) and collagen (IC(50)=1.4 uM). The protein is Venom phosphodiesterase of Macrovipera lebetinus (Levantine viper).